The primary structure comprises 440 residues: tRNA(Ile)-lysidine synthase (440 aa).

28–33 (SGGMDS) is an ATP binding site.

This sequence belongs to the tRNA(Ile)-lysidine synthase family.

Its subcellular location is the cytoplasm. The enzyme catalyses cytidine(34) in tRNA(Ile2) + L-lysine + ATP = lysidine(34) in tRNA(Ile2) + AMP + diphosphate + H(+). Ligates lysine onto the cytidine present at position 34 of the AUA codon-specific tRNA(Ile) that contains the anticodon CAU, in an ATP-dependent manner. Cytidine is converted to lysidine, thus changing the amino acid specificity of the tRNA from methionine to isoleucine. The sequence is that of tRNA(Ile)-lysidine synthase from Xanthomonas axonopodis pv. citri (strain 306).